A 466-amino-acid polypeptide reads, in one-letter code: Asparagine--tRNA ligase (466 aa).

It belongs to the class-II aminoacyl-tRNA synthetase family. In terms of assembly, homodimer.

The protein localises to the cytoplasm. It catalyses the reaction tRNA(Asn) + L-asparagine + ATP = L-asparaginyl-tRNA(Asn) + AMP + diphosphate + H(+). The sequence is that of Asparagine--tRNA ligase from Vibrio parahaemolyticus serotype O3:K6 (strain RIMD 2210633).